Reading from the N-terminus, the 788-residue chain is Phosphoribosylformylglycinamidine synthase subunit PurL (788 aa).

The active site involves His50. ATP-binding residues include Tyr53 and Lys92. Glu94 is a binding site for Mg(2+). Residues 95–98 (SHNH) and Arg117 each bind substrate. His96 functions as the Proton acceptor in the catalytic mechanism. Asp118 is a Mg(2+) binding site. Gln241 provides a ligand contact to substrate. Position 269 (Asp269) interacts with Mg(2+). 313 to 315 (ESQ) lines the substrate pocket. Residues Asp524 and Gly561 each coordinate ATP. A Mg(2+)-binding site is contributed by Asn562. Ser564 contacts substrate.

This sequence belongs to the FGAMS family. Monomer. Part of the FGAM synthase complex composed of 1 PurL, 1 PurQ and 2 PurS subunits.

It is found in the cytoplasm. The enzyme catalyses N(2)-formyl-N(1)-(5-phospho-beta-D-ribosyl)glycinamide + L-glutamine + ATP + H2O = 2-formamido-N(1)-(5-O-phospho-beta-D-ribosyl)acetamidine + L-glutamate + ADP + phosphate + H(+). The protein operates within purine metabolism; IMP biosynthesis via de novo pathway; 5-amino-1-(5-phospho-D-ribosyl)imidazole from N(2)-formyl-N(1)-(5-phospho-D-ribosyl)glycinamide: step 1/2. Functionally, part of the phosphoribosylformylglycinamidine synthase complex involved in the purines biosynthetic pathway. Catalyzes the ATP-dependent conversion of formylglycinamide ribonucleotide (FGAR) and glutamine to yield formylglycinamidine ribonucleotide (FGAM) and glutamate. The FGAM synthase complex is composed of three subunits. PurQ produces an ammonia molecule by converting glutamine to glutamate. PurL transfers the ammonia molecule to FGAR to form FGAM in an ATP-dependent manner. PurS interacts with PurQ and PurL and is thought to assist in the transfer of the ammonia molecule from PurQ to PurL. The protein is Phosphoribosylformylglycinamidine synthase subunit PurL of Nostoc punctiforme (strain ATCC 29133 / PCC 73102).